The primary structure comprises 694 residues: Putative serine/threonine-protein kinase R679 (694 aa).

Positions 167–548 constitute a Protein kinase domain; it reads ITKNKTVGKG…ITNILKHLFT (382 aa). ATP is bound by residues 173-181 and Lys196; that span reads VGKGAAGIA. Residue Asp395 is the Proton acceptor of the active site.

This sequence belongs to the protein kinase superfamily. Ser/Thr protein kinase family.

It is found in the virion. The enzyme catalyses L-seryl-[protein] + ATP = O-phospho-L-seryl-[protein] + ADP + H(+). It carries out the reaction L-threonyl-[protein] + ATP = O-phospho-L-threonyl-[protein] + ADP + H(+). In Acanthamoeba polyphaga (Amoeba), this protein is Putative serine/threonine-protein kinase R679.